A 596-amino-acid chain; its full sequence is Nuclear receptor subfamily 2 group C member 2 (596 aa).

Ser-19 carries the post-translational modification Phosphoserine; by MAPK. A Phosphoserine modification is found at Ser-46. Residues Ser-55 and Ser-68 each carry the phosphoserine; by MAPK modification. Phosphoserine is present on Ser-98. A DNA-binding region (nuclear receptor) is located at residues 114–189; that stretch reads VEYCVVCGDK…MGMKMESVQS (76 aa). 2 consecutive NR C4-type zinc fingers follow at residues 117 to 137 and 153 to 177; these read CVVC…CEGC and CRSS…LKKC. Residue Lys-192 forms a Glycyl lysine isopeptide (Lys-Gly) (interchain with G-Cter in SUMO2) linkage. Ser-219 is subject to Phosphoserine. Lys-231 bears the N6-acetyllysine mark. The NR LBD domain maps to 341–583; the sequence is GSIHVISRDQ…SIIPYILKME (243 aa).

This sequence belongs to the nuclear hormone receptor family. NR2 subfamily. As to quaternary structure, homodimer; can bind DNA as homodimer. Heterodimer; binds DNA as a heterodimer with NR2C1 required for chromatin remodeling and for binding to promoter regions such as globin DR1 repeats. Interacts with NR2C2AP; the interaction represses selective NR2C2-mediated transcriptional activity. Interacts with PCAF; the interaction preferentially occurs on the non-phosphorylated form and induces NR2C2-mediated transactivation activity and does not require the ligand-binding domain. Interacts (MAPK-mediated phosphorylated form) with NRIP1; the interaction promotes repression of NR2C2-mediated activity. Interacts with NLRP10. Interacts (via ligand-binding region) with transcriptional corepressor JAZF1; the interaction promotes NR2C2-mediated transcriptional repression. In terms of processing, phosphorylation on Ser-19 and Ser-68 is an important regulator of NR2C2-mediated transcriptional activity. Phosphorylation on these residues recruits the corepressor, NRIP1, leading to transcripional repression, whereas the non-phosphorylated form preferentially recruits the coactivator, PCAF. In terms of tissue distribution, expressed, during embryogenesis, in perichondrium, developing glomeruli structures and tubules of kidney, as well as in intestiinal villi. Also expressed in lung and hair follicles.

It is found in the nucleus. Functionally, orphan nuclear receptor that can act as a repressor or activator of transcription. An important repressor of nuclear receptor signaling pathways such as retinoic acid receptor, retinoid X, vitamin D3 receptor, thyroid hormone receptor and estrogen receptor pathways. May regulate gene expression during the late phase of spermatogenesis. Activates transcriptional activity of LHCG and is antagonist of PPARA-mediated transactivation. Together with NR2C1, forms the core of the DRED (direct repeat erythroid-definitive) complex that represses embryonic and fetal globin transcription including that of GATA1. Binds to hormone response elements (HREs) consisting of two 5'-AGGTCA-3' half site direct repeat consensus sequences. Plays a fundamental role in early embryonic development and embryonic stem cells. Required for normal spermatogenesis and cerebellum development. Appears to be important for neurodevelopmentally regulated behavior. In Mus musculus (Mouse), this protein is Nuclear receptor subfamily 2 group C member 2 (Nr2c2).